Here is a 240-residue protein sequence, read N- to C-terminus: Ribosomal RNA small subunit methyltransferase G (240 aa).

S-adenosyl-L-methionine-binding positions include G79, F84, A130–E131, and R149.

It belongs to the methyltransferase superfamily. RNA methyltransferase RsmG family.

It is found in the cytoplasm. Functionally, specifically methylates the N7 position of a guanine in 16S rRNA. This Lactobacillus acidophilus (strain ATCC 700396 / NCK56 / N2 / NCFM) protein is Ribosomal RNA small subunit methyltransferase G.